Here is a 172-residue protein sequence, read N- to C-terminus: SsrA-binding protein (172 aa).

This sequence belongs to the SmpB family.

The protein resides in the cytoplasm. Required for rescue of stalled ribosomes mediated by trans-translation. Binds to transfer-messenger RNA (tmRNA), required for stable association of tmRNA with ribosomes. tmRNA and SmpB together mimic tRNA shape, replacing the anticodon stem-loop with SmpB. tmRNA is encoded by the ssrA gene; the 2 termini fold to resemble tRNA(Ala) and it encodes a 'tag peptide', a short internal open reading frame. During trans-translation Ala-aminoacylated tmRNA acts like a tRNA, entering the A-site of stalled ribosomes, displacing the stalled mRNA. The ribosome then switches to translate the ORF on the tmRNA; the nascent peptide is terminated with the 'tag peptide' encoded by the tmRNA and targeted for degradation. The ribosome is freed to recommence translation, which seems to be the essential function of trans-translation. In Dehalococcoides mccartyi (strain ATCC BAA-2266 / KCTC 15142 / 195) (Dehalococcoides ethenogenes (strain 195)), this protein is SsrA-binding protein.